The sequence spans 275 residues: Large ribosomal subunit protein uL2c (275 aa).

Residues 219–254 (TVRGSVMNPCDHPHGGGEGRAPIGRTRPLTPWGKPA) are disordered.

Belongs to the universal ribosomal protein uL2 family. Part of the 50S ribosomal subunit.

The protein resides in the plastid. Its subcellular location is the chloroplast. In Phaeodactylum tricornutum (strain CCAP 1055/1), this protein is Large ribosomal subunit protein uL2c (rpl2).